Consider the following 393-residue polypeptide: Chorismate synthase (393 aa).

Residues Arg-40 and Arg-46 each contribute to the NADP(+) site. FMN-binding positions include 129-131 (RSS), 249-250 (QA), Gly-301, 316-320 (KPIPT), and Arg-342.

It belongs to the chorismate synthase family. As to quaternary structure, homotetramer. FMNH2 is required as a cofactor.

It carries out the reaction 5-O-(1-carboxyvinyl)-3-phosphoshikimate = chorismate + phosphate. It functions in the pathway metabolic intermediate biosynthesis; chorismate biosynthesis; chorismate from D-erythrose 4-phosphate and phosphoenolpyruvate: step 7/7. Catalyzes the anti-1,4-elimination of the C-3 phosphate and the C-6 proR hydrogen from 5-enolpyruvylshikimate-3-phosphate (EPSP) to yield chorismate, which is the branch point compound that serves as the starting substrate for the three terminal pathways of aromatic amino acid biosynthesis. This reaction introduces a second double bond into the aromatic ring system. This Pelobacter propionicus (strain DSM 2379 / NBRC 103807 / OttBd1) protein is Chorismate synthase.